Reading from the N-terminus, the 180-residue chain is UPF0227 protein YcfP (180 aa).

It belongs to the UPF0227 family.

This chain is UPF0227 protein YcfP, found in Escherichia coli O9:H4 (strain HS).